Reading from the N-terminus, the 284-residue chain is MSWFHRERAGINRTQIKKSRVPQGMWVKCPGCSATLLAKDLDANLNVCPTCGHHHRIGARRRLESLLDAATWQELDSGMTSVDFLQFKDSKSYQERIDSALSKGGSRDAVVCVEGSIEGTAVQVAVFDFSFMGGSMGSVVGEKITRAIERGVQKRQPVIIVSASGGARMQESILSLMQMAKTSAALAKLKDAGLPFISILTDPTTGGVTASFAMLGDINIAEPKALIGFAGPRVIEQTLRQKLPDGFQRAEYLLEHGMLDVIVPRTEMRAKLASILGILYRPAA.

The 260-residue stretch at Met-25–Ala-284 folds into the CoA carboxyltransferase N-terminal domain. Positions 29, 32, 48, and 51 each coordinate Zn(2+). The C4-type zinc-finger motif lies at Cys-29 to Cys-51.

Belongs to the AccD/PCCB family. Acetyl-CoA carboxylase is a heterohexamer composed of biotin carboxyl carrier protein (AccB), biotin carboxylase (AccC) and two subunits each of ACCase subunit alpha (AccA) and ACCase subunit beta (AccD). Requires Zn(2+) as cofactor.

The protein localises to the cytoplasm. The catalysed reaction is N(6)-carboxybiotinyl-L-lysyl-[protein] + acetyl-CoA = N(6)-biotinyl-L-lysyl-[protein] + malonyl-CoA. The protein operates within lipid metabolism; malonyl-CoA biosynthesis; malonyl-CoA from acetyl-CoA: step 1/1. Its function is as follows. Component of the acetyl coenzyme A carboxylase (ACC) complex. Biotin carboxylase (BC) catalyzes the carboxylation of biotin on its carrier protein (BCCP) and then the CO(2) group is transferred by the transcarboxylase to acetyl-CoA to form malonyl-CoA. This Pelobacter propionicus (strain DSM 2379 / NBRC 103807 / OttBd1) protein is Acetyl-coenzyme A carboxylase carboxyl transferase subunit beta.